We begin with the raw amino-acid sequence, 321 residues long: Beta-porphyranase B (321 aa).

The signal sequence occupies residues 1–20; it reads MRKTVLYLSAASLFLSSYTL. The GH16 domain occupies 31 to 319; it reads EHIKNLPEAP…WVRAYKLVPI (289 aa). 5 residues coordinate substrate: W72, R76, E173, E178, and E284. Catalysis depends on E173, which acts as the Nucleophile. E178 serves as the catalytic Proton donor.

This sequence belongs to the glycosyl hydrolase 16 family.

It carries out the reaction Hydrolysis of beta-D-galactopyranose-(1-&gt;4)-alpha-L-galactopyranose-6-sulfate linkages in porphyran.. Its function is as follows. Cleaves the sulfated polysaccharide porphyran at the (1-&gt;4) linkages between beta-D-galactopyranose and alpha-L-galactopyranose-6-sulfate, forming mostly the disaccharide alpha-L-galactopyranose-6-sulfate-(1-&gt;3)-beta-D-galactose. Some longer oligosaccharides of even number of residues are also observed. Inactive on the non-sulfated agarose portion of the porphyran backbone. The sequence is that of Beta-porphyranase B from Phocaeicola plebeius (strain DSM 17135 / JCM 12973 / CCUG 54634 / M2) (Bacteroides plebeius).